We begin with the raw amino-acid sequence, 190 residues long: Cathelicidin-3 (190 aa).

Positions Met1–Ala29 are cleaved as a signal peptide. At Gln30 the chain carries Pyrrolidone carboxylic acid. The propeptide occupies Gln30–Val130. 2 disulfide bridges follow: Cys85–Cys96 and Cys107–Cys124. Over residues Leu133 to Pro151 the composition is skewed to basic residues. The disordered stretch occupies residues Leu133 to Leu190. Positions Trp172–Leu190 are enriched in pro residues.

It belongs to the cathelicidin family.

It localises to the secreted. Exerts, in vitro, a potent antimicrobial activity. Probably due to an impairment of the function of the respiratory chain and of energy-dependent activities in the inner membrane of susceptible microorganisms. The polypeptide is Cathelicidin-3 (CATHL3) (Ovis aries (Sheep)).